The sequence spans 828 residues: Vacuolar transporter chaperone complex subunit 2 (828 aa).

Residues 1 to 146 (MLFGVKLANE…PKYPSVKSLL (146 aa)) enclose the SPX domain. Over 1-693 (MLFGVKLANE…EAKVWLANER (693 aa)) the chain is Cytoplasmic. The interval 127–134 (KIVKKHDK) is important for inositol polyphosphate binding. A phosphoserine mark is found at Ser182, Ser187, Ser196, Ser264, Ser583, Ser615, and Ser616. Residues 580 to 636 (RRLSNLKEPQHQAAVPVSQEENERITSQGDLEADGSSDEETEQEPHSKRSKKVRRRK) form a disordered region. Acidic residues predominate over residues 610 to 621 (LEADGSSDEETE). Residue Thr620 is modified to Phosphothreonine. A Phosphoserine modification is found at Ser626. Residues 627 to 636 (KRSKKVRRRK) show a composition bias toward basic residues. The residue at position 657 (Ser657) is a Phosphoserine. Residues 694–716 (TFNRWLSVTSLLSVLTFSIYNSV) traverse the membrane as a helical segment. The Vacuolar portion of the chain corresponds to 717 to 727 (KKAEYPTLANY). A helical membrane pass occupies residues 728–748 (MAYVYFGLTIFCALWSYSIYM). Topologically, residues 749-766 (KRVDIIQQRSGQHLDAPL) are cytoplasmic. A helical transmembrane segment spans residues 767-787 (GPVLVSIVLFVTLVVNFVMAF). Residues 788-828 (RNAAKSRQELQIQNLEVPERIPEVLRPLQNYLFKLMGPSSD) lie on the Vacuolar side of the membrane.

Belongs to the VTC2/3 family. In terms of assembly, the VTC core complex is an integral membrane heterooligomer composed of the catalytic subunit VTC4 and the accessory subunits VTC1, VTC2 and VTC3. The complex exists in 2 different sub-complexes: VTC1-VTC2-VCT4 and VCT1-VTC3-VTC4. The VCT1-VTC3-VTC4 subcomplex is mostly found on the vacuolar membrane. The VTC1-VTC2-VCT4 subcomplex is observed in the cell periphery, probably ER and nuclear envelope, but localizes to the vacuole under phosphate starvation. Each subunit contains 3 transmembrane helices. VTC1 is a small membrane protein without hydrophilic domain. VTC2, VTC3 and VTC4 are related and have 2 hydrophilic domains that face the cytosol, an N-terminal SPX domain and the central core domain. The central core in VTC4 is the catalytic domain, with the essential catalytic lysine replaced by isoleucine and leucine in VTC2 and VTC3, respectively. The core complex associates with the accessory subunit VTC5. The complex interacts with the v-SNARE NYV1 and with the V(0) subunit of V-ATPase VPH1.

Its subcellular location is the vacuole membrane. The protein resides in the cytoplasm. It is found in the cell cortex. The protein localises to the endoplasmic reticulum membrane. It localises to the cytoplasmic vesicle. Its subcellular location is the autophagosome membrane. In terms of biological role, accessory subunit of the vacuolar transporter chaperone (VTC) complex. The VTC complex acts as a vacuolar polyphosphate polymerase that catalyzes the synthesis of inorganic polyphosphate (polyP) via transfer of phosphate from ATP to a growing polyP chain, releasing ADP. VTC exposes its catalytic domain VTC4 to the cytosol, where the growing polyP chain winds through a tunnel-shaped pocket, integrating cytoplasmic polymer synthesis with polyP membrane translocation. The VTC complex carries 9 vacuolar transmembrane domains, which are likely to constitute the translocation channel into the organelle lumen. PolyP synthesis is tightly coupled to its transport into the vacuole lumen, in order to avoid otherwise toxic intermediates in the cytosol, and it depends on the proton gradient across the membrane, formed by V-ATPase. Binds inositol hexakisphosphate (Ins6P) and similar inositol polyphosphates, such as 5-diphospho-inositol pentakisphosphate (5-InsP7); these are important intracellular signaling molecules. Inositol polyphosphate binding promotes vacuolar polyphosphate synthesis. The VTC complex also plays a role in vacuolar membrane fusion. Required for SEC18/NSF activity in SNARE priming, membrane binding of LMA1 and V(0) trans-complex formation. The protein is Vacuolar transporter chaperone complex subunit 2 of Saccharomyces cerevisiae (strain ATCC 204508 / S288c) (Baker's yeast).